We begin with the raw amino-acid sequence, 355 residues long: Probable L-aspartate decarboxylase (355 aa).

The residue at position 210 (lysine 210) is an N6-(pyridoxal phosphate)lysine.

This sequence belongs to the group II decarboxylase family. MfnA subfamily. Pyridoxal 5'-phosphate is required as a cofactor.

It catalyses the reaction L-aspartate + H(+) = beta-alanine + CO2. Its pathway is cofactor biosynthesis; coenzyme A biosynthesis. Functionally, catalyzes the decarboxylation of L-aspartate to produce beta-alanine. The polypeptide is Probable L-aspartate decarboxylase (Halobacterium salinarum (strain ATCC 29341 / DSM 671 / R1)).